Consider the following 305-residue polypeptide: Probable 5-dehydro-4-deoxyglucarate dehydratase (305 aa).

The protein belongs to the DapA family.

The catalysed reaction is 5-dehydro-4-deoxy-D-glucarate + H(+) = 2,5-dioxopentanoate + CO2 + H2O. It participates in carbohydrate acid metabolism; D-glucarate degradation; 2,5-dioxopentanoate from D-glucarate: step 2/2. This Pseudomonas entomophila (strain L48) protein is Probable 5-dehydro-4-deoxyglucarate dehydratase.